The following is a 252-amino-acid chain: Insulin-induced gene 1 protein (252 aa).

Residues methionine 1–leucine 59 lie on the Cytoplasmic side of the membrane. The tract at residues arginine 22–serine 48 is disordered. A helical membrane pass occupies residues valine 60 to isoleucine 82. Residues glutamine 83–alanine 101 are Extracellular-facing. Residues tryptophan 102–tyrosine 119 form a helical membrane-spanning segment. The Cytoplasmic segment spans residues proline 120–arginine 134. Residues glutamate 135–aspartate 157 traverse the membrane as a helical segment. Topologically, residues phenylalanine 158 to asparagine 160 are extracellular. A helical transmembrane segment spans residues asparagine 161–phenylalanine 179. Residues aspartate 180–serine 184 are Cytoplasmic-facing. A helical transmembrane segment spans residues glycine 185–asparagine 206. Residues glycine 207–arginine 220 lie on the Extracellular side of the membrane. The helical transmembrane segment at serine 221 to glycine 238 threads the bilayer. Over arginine 239–aspartate 252 the chain is Cytoplasmic. A KxHxx motif is present at residues proline 246–aspartate 252.

This sequence belongs to the INSIG family. In terms of assembly, interacts with SCAP; interaction is direct and only takes place in the presence of sterols; it prevents interaction between SCAP and the coat protein complex II (COPII). Associates with the SCAP-SREBP complex; association is mediated via its interaction with SCAP and only takes place in the presence of sterols.

It localises to the endoplasmic reticulum membrane. Its function is as follows. Oxysterol-binding protein that mediates feedback control of cholesterol synthesis by controlling both endoplasmic reticulum to Golgi transport of SCAP and degradation of HMGCR. Acts as a negative regulator of cholesterol biosynthesis by mediating the retention of the SCAP-SREBP complex in the endoplasmic reticulum, thereby blocking the processing of sterol regulatory element-binding proteins (SREBPs). Binds oxysterol, including 25-hydroxycholesterol, regulating interaction with SCAP and retention of the SCAP-SREBP complex in the endoplasmic reticulum. In presence of oxysterol, interacts with SCAP, retaining the SCAP-SREBP complex in the endoplasmic reticulum, thereby preventing SCAP from escorting SREBPs to the Golgi. Sterol deprivation reduces oxysterol-binding, disrupting the interaction between INSIG1 and SCAP, thereby promoting Golgi transport of the SCAP-SREBP complex, followed by processing and nuclear translocation of SREBPs. Also regulates cholesterol synthesis by regulating degradation of HMGCR. In Gallus gallus (Chicken), this protein is Insulin-induced gene 1 protein.